The following is a 443-amino-acid chain: Xaa-Pro dipeptidase (443 aa).

Mn(2+) is bound by residues Asp-246, Asp-257, His-339, Glu-384, and Glu-423.

This sequence belongs to the peptidase M24B family. Bacterial-type prolidase subfamily. The cofactor is Mn(2+).

It catalyses the reaction Xaa-L-Pro dipeptide + H2O = an L-alpha-amino acid + L-proline. In terms of biological role, splits dipeptides with a prolyl residue in the C-terminal position. This chain is Xaa-Pro dipeptidase, found in Serratia proteamaculans (strain 568).